The primary structure comprises 771 residues: Metal transporter CNNM4 (771 aa).

Over 1-175 (MAPGGGGGRR…LLFMVEEHGR (175 aa)) the chain is Extracellular. Residue Asn119 is glycosylated (N-linked (GlcNAc...) asparagine). The 181-residue stretch at 175-355 (RFLPLWLHIL…EPYNDLVKEE (181 aa)) folds into the CNNM transmembrane domain. Residues 176 to 196 (FLPLWLHILLVMVLLVLSGIF) traverse the membrane as a helical segment. Over 197–237 (SGLNLGLMALDPMELRIVQNCGTEKERKYARKIEPIRRKGN) the chain is Cytoplasmic. The segment at residues 238-258 (YLLCSLLLGNVLVNTSLTILL) is an intramembrane region (helical). Over 259 to 261 (DNL) the chain is Cytoplasmic. The helical transmembrane segment at 262-282 (IGSGIMAVASSTIGIVIFGEI) threads the bilayer. The Extracellular portion of the chain corresponds to 283–290 (LPQALCSR). A helical membrane pass occupies residues 291–313 (HGLAVGANTIVLTKVFMLLTFPL). Residues 314 to 771 (SFPISKLLDF…LHRASEEETI (458 aa)) are Cytoplasmic-facing. CBS domains lie at 374-435 (MTQL…CTPL) and 442-508 (YNHP…ILDE). 3 positions are modified to phosphoserine: Ser657, Ser661, and Ser766.

Belongs to the ACDP family. Interacts with COX11. In terms of tissue distribution, cornea, retina, teeth (at protein level). In the retina it is predominantly localized to the outer plexiform layer, inner plexiform layer and ganglion cell layer. In the tooth strongest expression is observed in the cell body of the ameloblasts. Expressed at high levels in the gastrointestinal tract and testis.

It is found in the cell membrane. Its function is as follows. Probable metal transporter. The interaction with the metal ion chaperone COX11 suggests that it may play a role in sensory neuron functions. May play a role in biomineralization and retinal function. In Mus musculus (Mouse), this protein is Metal transporter CNNM4 (Cnnm4).